The chain runs to 109 residues: Thiosulfate sulfurtransferase GlpE (109 aa).

One can recognise a Rhodanese domain in the interval 17–105 (KEGKTALVDI…WARSYPQDIT (89 aa)). Residue C65 is the Cysteine persulfide intermediate of the active site.

The protein belongs to the GlpE family.

The protein localises to the cytoplasm. It carries out the reaction thiosulfate + hydrogen cyanide = thiocyanate + sulfite + 2 H(+). The enzyme catalyses thiosulfate + [thioredoxin]-dithiol = [thioredoxin]-disulfide + hydrogen sulfide + sulfite + 2 H(+). Functionally, transferase that catalyzes the transfer of sulfur from thiosulfate to thiophilic acceptors such as cyanide or dithiols. May function in a CysM-independent thiosulfate assimilation pathway by catalyzing the conversion of thiosulfate to sulfite, which can then be used for L-cysteine biosynthesis. The protein is Thiosulfate sulfurtransferase GlpE of Yersinia pestis.